A 103-amino-acid chain; its full sequence is Histone H4 (103 aa).

Gly residues predominate over residues methionine 1 to glycine 14. A disordered region spans residues methionine 1–arginine 20. A DNA-binding region spans residues lysine 17–lysine 21.

This sequence belongs to the histone H4 family. In terms of assembly, the nucleosome is a histone octamer containing two molecules each of H2A, H2B, H3 and H4 assembled in one H3-H4 heterotetramer and two H2A-H2B heterodimers. The octamer wraps approximately 147 bp of DNA.

It is found in the nucleus. The protein resides in the chromosome. In terms of biological role, core component of nucleosome. Nucleosomes wrap and compact DNA into chromatin, limiting DNA accessibility to the cellular machineries which require DNA as a template. Histones thereby play a central role in transcription regulation, DNA repair, DNA replication and chromosomal stability. DNA accessibility is regulated via a complex set of post-translational modifications of histones, also called histone code, and nucleosome remodeling. The polypeptide is Histone H4 (H41) (Physarum polycephalum (Slime mold)).